The chain runs to 329 residues: Cathepsin K (329 aa).

The first 15 residues, 1 to 15, serve as a signal peptide directing secretion; that stretch reads MWVFKFLLLPMVSFA. A propeptide spans 16–114 (activation peptide); that stretch reads LSPEEMLDTQ…TLYTPEWEGR (99 aa). A glycan (N-linked (GlcNAc...) asparagine) is linked at asparagine 103. Disulfide bonds link cysteine 136/cysteine 177 and cysteine 170/cysteine 210. Cysteine 139 is an active-site residue. A glycan (N-linked (GlcNAc...) asparagine) is linked at asparagine 213. Cysteine 269 and cysteine 318 form a disulfide bridge. Residues histidine 276 and asparagine 296 contribute to the active site.

It belongs to the peptidase C1 family. Predominantly expressed in bones. Expressed in thyroid epithelial cells.

It localises to the lysosome. The protein localises to the secreted. It is found in the apical cell membrane. The enzyme catalyses Broad proteolytic activity. With small-molecule substrates and inhibitors, the major determinant of specificity is P2, which is preferably Leu, Met &gt; Phe, and not Arg.. Thiol protease involved in osteoclastic bone resorption. Displays potent endoprotease activity against fibrinogen at acid pH. May play an important role in extracellular matrix degradation. Involved in the release of thyroid hormone thyroxine (T4) by limited proteolysis of TG/thyroglobulin in the thyroid follicle lumen. This is Cathepsin K (Ctsk) from Mus musculus (Mouse).